We begin with the raw amino-acid sequence, 375 residues long: Succinyl-diaminopimelate desuccinylase (375 aa).

Residue histidine 66 participates in Zn(2+) binding. Aspartate 68 is a catalytic residue. Aspartate 99 is a Zn(2+) binding site. Glutamate 130 serves as the catalytic Proton acceptor. Zn(2+) is bound by residues glutamate 131, glutamate 159, and histidine 345.

The protein belongs to the peptidase M20A family. DapE subfamily. In terms of assembly, homodimer. Zn(2+) is required as a cofactor. Co(2+) serves as cofactor.

The catalysed reaction is N-succinyl-(2S,6S)-2,6-diaminopimelate + H2O = (2S,6S)-2,6-diaminopimelate + succinate. Its pathway is amino-acid biosynthesis; L-lysine biosynthesis via DAP pathway; LL-2,6-diaminopimelate from (S)-tetrahydrodipicolinate (succinylase route): step 3/3. Its function is as follows. Catalyzes the hydrolysis of N-succinyl-L,L-diaminopimelic acid (SDAP), forming succinate and LL-2,6-diaminopimelate (DAP), an intermediate involved in the bacterial biosynthesis of lysine and meso-diaminopimelic acid, an essential component of bacterial cell walls. The sequence is that of Succinyl-diaminopimelate desuccinylase from Xanthobacter autotrophicus (strain ATCC BAA-1158 / Py2).